The sequence spans 433 residues: ATP-dependent protease ATPase subunit HslU (433 aa).

Residues V18, G60 to E65, D246, E311, and R383 contribute to the ATP site.

Belongs to the ClpX chaperone family. HslU subfamily. In terms of assembly, a double ring-shaped homohexamer of HslV is capped on each side by a ring-shaped HslU homohexamer. The assembly of the HslU/HslV complex is dependent on binding of ATP.

Its subcellular location is the cytoplasm. ATPase subunit of a proteasome-like degradation complex; this subunit has chaperone activity. The binding of ATP and its subsequent hydrolysis by HslU are essential for unfolding of protein substrates subsequently hydrolyzed by HslV. HslU recognizes the N-terminal part of its protein substrates and unfolds these before they are guided to HslV for hydrolysis. The chain is ATP-dependent protease ATPase subunit HslU from Nitrobacter hamburgensis (strain DSM 10229 / NCIMB 13809 / X14).